Reading from the N-terminus, the 172-residue chain is Thioredoxin Y1, chloroplastic (172 aa).

Residues 1–62 (MASISLSSST…SSTTRCTPRR (62 aa)) constitute a chloroplast transit peptide. Residues 63-169 (IEAKKQTFDS…LIQRIEDSLK (107 aa)) form the Thioredoxin domain. Active-site nucleophile residues include cysteine 93 and cysteine 96. Cysteine 93 and cysteine 96 are joined by a disulfide.

Belongs to the thioredoxin family. Plant Y-type subfamily. Expressed in roots and seeds.

The protein localises to the plastid. The protein resides in the chloroplast stroma. In terms of biological role, thiol-disulfide oxidoreductase that poorly activates chloroplastic malate dehydrogenase (NADP-MDH) and fructose-1,6-bisphosphatase. Provides reducing equivalents for peroxiredoxin Q. In Arabidopsis thaliana (Mouse-ear cress), this protein is Thioredoxin Y1, chloroplastic.